We begin with the raw amino-acid sequence, 105 residues long: Large ribosomal subunit protein bL21 (105 aa).

Belongs to the bacterial ribosomal protein bL21 family. In terms of assembly, part of the 50S ribosomal subunit. Contacts protein L20.

In terms of biological role, this protein binds to 23S rRNA in the presence of protein L20. The chain is Large ribosomal subunit protein bL21 from Rickettsia africae (strain ESF-5).